Reading from the N-terminus, the 873-residue chain is Nitrate reductase [NADPH] (873 aa).

Residues 30 to 61 (TELDTADIPLPPPSKEPTEVLSLDKTTPDSHV) are disordered. C150 contacts Mo-molybdopterin. In terms of domain architecture, Cytochrome b5 heme-binding spans 512-587 (TRIIDLEEFK…MPDYHIGTLD (76 aa)). Heme is bound by residues H547 and H570. The FAD-binding FR-type domain maps to 616-729 (KAWTKATLTK…KGPTGRFEYL (114 aa)). FAD contacts are provided by residues 672–675 (RSYT), 689–693 (LIKIY), 703–705 (KMT), and T756. 843–852 (MVLVCGPEAM) lines the NADP(+) pocket.

The protein belongs to the nitrate reductase family. Homodimer. FAD serves as cofactor. Requires heme as cofactor. The cofactor is Mo-molybdopterin.

It catalyses the reaction nitrite + NADP(+) + H2O = nitrate + NADPH + H(+). Its function is as follows. Nitrate reductase is a key enzyme involved in the first step of nitrate assimilation in plants, fungi and bacteria. In Emericella nidulans (strain FGSC A4 / ATCC 38163 / CBS 112.46 / NRRL 194 / M139) (Aspergillus nidulans), this protein is Nitrate reductase [NADPH] (niaD).